The following is a 37-amino-acid chain: Large ribosomal subunit protein bL36A (37 aa).

This sequence belongs to the bacterial ribosomal protein bL36 family.

This Actinobacillus pleuropneumoniae serotype 5b (strain L20) protein is Large ribosomal subunit protein bL36A.